The chain runs to 250 residues: Green-light absorbing proteorhodopsin (250 aa).

The signal sequence occupies residues 1–18 (MGKLLLILGSVIALPTFA). Residues 19 to 29 (AGGGDLDASDY) are Extracellular-facing. A helical transmembrane segment spans residues 30–53 (TGVSFWLVTAALLASTVFFFVERD). The Cytoplasmic portion of the chain corresponds to 54–58 (RVSAK). A helical membrane pass occupies residues 59 to 87 (WKTSLTVSGLVTGIAFWHYMYMRGVWIET). The Extracellular portion of the chain corresponds to 88–90 (GDS). Residues 91-118 (PTVFRYIDWLLTVPLLICEFYLILAAAT) form a helical membrane-spanning segment. Over 119–121 (NVA) the chain is Cytoplasmic. Residues 122 to 144 (GSLFKKLLVGSLVMLVFGYMGEA) form a helical membrane-spanning segment. Residues 145 to 147 (GIM) lie on the Extracellular side of the membrane. A helical membrane pass occupies residues 148–177 (AAWPAFIIGCLAWVYMIYELWAGEGKSACN). At 178-180 (TAS) the chain is on the cytoplasmic side. A helical transmembrane segment spans residues 181 to 208 (PAVQSAYNTMMYIIIFGWAIYPVGYFTG). Over 209–218 (YLMGDGGSAL) the chain is Extracellular. The chain crosses the membrane as a helical span at residues 219 to 249 (NLNLIYNLADFVNKILFGLIIWNVAVKESSN). Lys-232 is subject to N6-(retinylidene)lysine. Residue Ala-250 is a topological domain, cytoplasmic.

The protein belongs to the archaeal/bacterial/fungal opsin family. Homopentamer. GPR protomers assemble into a pentamer around a central pore with a C5 symmetry axis. Contains one covalently linked retinal chromophore per subunit.

It is found in the cell membrane. In terms of biological role, light-driven proton pump. This chain is Green-light absorbing proteorhodopsin, found in Unknown prokaryotic organism.